A 153-amino-acid polypeptide reads, in one-letter code: Transcriptional repressor NrdR 2 (153 aa).

The segment at 3-34 (CPFCGQDDTQVKDSRPTDDNAAIRRRRACPGC) is a zinc-finger region. In terms of domain architecture, ATP-cone spans 49–139 (LVVVKKDGSR…VYRNFREAKD (91 aa)).

The protein belongs to the NrdR family. Zn(2+) is required as a cofactor.

In terms of biological role, negatively regulates transcription of bacterial ribonucleotide reductase nrd genes and operons by binding to NrdR-boxes. In Paramagnetospirillum magneticum (strain ATCC 700264 / AMB-1) (Magnetospirillum magneticum), this protein is Transcriptional repressor NrdR 2.